The chain runs to 314 residues: 4-hydroxy-3-methylbut-2-enyl diphosphate reductase (314 aa).

A [4Fe-4S] cluster-binding site is contributed by Cys-12. (2E)-4-hydroxy-3-methylbut-2-enyl diphosphate is bound by residues His-41 and His-74. His-41 and His-74 together coordinate dimethylallyl diphosphate. 2 residues coordinate isopentenyl diphosphate: His-41 and His-74. Cys-96 is a binding site for [4Fe-4S] cluster. Residue His-124 coordinates (2E)-4-hydroxy-3-methylbut-2-enyl diphosphate. Residue His-124 participates in dimethylallyl diphosphate binding. His-124 serves as a coordination point for isopentenyl diphosphate. Glu-126 (proton donor) is an active-site residue. Residue Thr-167 participates in (2E)-4-hydroxy-3-methylbut-2-enyl diphosphate binding. Cys-197 provides a ligand contact to [4Fe-4S] cluster. (2E)-4-hydroxy-3-methylbut-2-enyl diphosphate-binding residues include Ser-225, Ser-226, Asn-227, and Ser-269. Ser-225, Ser-226, Asn-227, and Ser-269 together coordinate dimethylallyl diphosphate. Ser-225, Ser-226, Asn-227, and Ser-269 together coordinate isopentenyl diphosphate.

This sequence belongs to the IspH family. [4Fe-4S] cluster serves as cofactor.

It catalyses the reaction isopentenyl diphosphate + 2 oxidized [2Fe-2S]-[ferredoxin] + H2O = (2E)-4-hydroxy-3-methylbut-2-enyl diphosphate + 2 reduced [2Fe-2S]-[ferredoxin] + 2 H(+). The catalysed reaction is dimethylallyl diphosphate + 2 oxidized [2Fe-2S]-[ferredoxin] + H2O = (2E)-4-hydroxy-3-methylbut-2-enyl diphosphate + 2 reduced [2Fe-2S]-[ferredoxin] + 2 H(+). Its pathway is isoprenoid biosynthesis; dimethylallyl diphosphate biosynthesis; dimethylallyl diphosphate from (2E)-4-hydroxy-3-methylbutenyl diphosphate: step 1/1. The protein operates within isoprenoid biosynthesis; isopentenyl diphosphate biosynthesis via DXP pathway; isopentenyl diphosphate from 1-deoxy-D-xylulose 5-phosphate: step 6/6. Functionally, catalyzes the conversion of 1-hydroxy-2-methyl-2-(E)-butenyl 4-diphosphate (HMBPP) into a mixture of isopentenyl diphosphate (IPP) and dimethylallyl diphosphate (DMAPP). Acts in the terminal step of the DOXP/MEP pathway for isoprenoid precursor biosynthesis. The polypeptide is 4-hydroxy-3-methylbut-2-enyl diphosphate reductase (Idiomarina loihiensis (strain ATCC BAA-735 / DSM 15497 / L2-TR)).